Consider the following 345-residue polypeptide: Phosphate acyltransferase (345 aa).

Belongs to the PlsX family. As to quaternary structure, homodimer. Probably interacts with PlsY.

The protein resides in the cytoplasm. It carries out the reaction a fatty acyl-[ACP] + phosphate = an acyl phosphate + holo-[ACP]. It participates in lipid metabolism; phospholipid metabolism. Catalyzes the reversible formation of acyl-phosphate (acyl-PO(4)) from acyl-[acyl-carrier-protein] (acyl-ACP). This enzyme utilizes acyl-ACP as fatty acyl donor, but not acyl-CoA. The protein is Phosphate acyltransferase of Wolbachia pipientis subsp. Culex pipiens (strain wPip).